The chain runs to 272 residues: MALGDANVGSAPGVDFSALQRVKQSEELLAQLYVVEETPRRLGRGPVHALMVISVLSVVAFIATLLMRYNTFVTMSEDTQAKRSNYEVMIQRRDNLFGNLVKLTLNHAALEHSIFSHTSDKRTEGVEAGKGGPIGSALEQLMKQGGIGKLLGDIGGGKALLGADGGFGNALGRLMAVVEQYPTIQSVDTYKHMMTSLVEMEDRIATRREDYNAAASTYNIEITKWPWNYLAFITGFKRAEYFQEKPAGDTPIITPQLFQELLPLNHAQDIKK.

Residues 1-46 (MALGDANVGSAPGVDFSALQRVKQSEELLAQLYVVEETPRRLGRGP) are Cytoplasmic-facing. A helical transmembrane segment spans residues 47–67 (VHALMVISVLSVVAFIATLLM). Over 68–272 (RYNTFVTMSE…PLNHAQDIKK (205 aa)) the chain is Lumenal.

Belongs to the LemA family.

The protein resides in the magnetosome membrane. Its function is as follows. Essential for magnetosome formation. Can be used to induce magnetosome formation. The protein is Magnetosome protein MamQ 1 (mamQ1) of Paramagnetospirillum magneticum (strain ATCC 700264 / AMB-1) (Magnetospirillum magneticum).